Consider the following 266-residue polypeptide: 3-deoxy-manno-octulosonate cytidylyltransferase (266 aa).

The protein belongs to the KdsB family.

It localises to the cytoplasm. The enzyme catalyses 3-deoxy-alpha-D-manno-oct-2-ulosonate + CTP = CMP-3-deoxy-beta-D-manno-octulosonate + diphosphate. It participates in nucleotide-sugar biosynthesis; CMP-3-deoxy-D-manno-octulosonate biosynthesis; CMP-3-deoxy-D-manno-octulosonate from 3-deoxy-D-manno-octulosonate and CTP: step 1/1. It functions in the pathway bacterial outer membrane biogenesis; lipopolysaccharide biosynthesis. Activates KDO (a required 8-carbon sugar) for incorporation into bacterial lipopolysaccharide in Gram-negative bacteria. This chain is 3-deoxy-manno-octulosonate cytidylyltransferase, found in Paraburkholderia xenovorans (strain LB400).